The chain runs to 314 residues: Probable cell division protein WhiA (314 aa).

Positions 274-308 (SLKELGEMISTGPISKSGVNHRLRKLNELADKIRS) form a DNA-binding region, H-T-H motif.

Belongs to the WhiA family.

In terms of biological role, involved in cell division and chromosome segregation. This is Probable cell division protein WhiA from Staphylococcus haemolyticus (strain JCSC1435).